We begin with the raw amino-acid sequence, 398 residues long: Secreted aspartic protease 2 (398 aa).

The first 18 residues, 1–18 (MFLKNIFIALAIALLVDA), serve as a signal peptide directing secretion. A propeptide spans 19 to 56 (TPTTTKRSAGFVALDFSVVKTPKAFPVTNGQEGKTSKR) (activation peptide). Positions 70-384 (YAADITVGSN…DLDDNEISLA (315 aa)) constitute a Peptidase A1 domain. Asp-88 is an active-site residue. 88–90 (DTG) contributes to the pepstatin A binding site. Cys-103 and Cys-115 are joined by a disulfide. Position 141-142 (141-142 (GD)) interacts with pepstatin A. Positions 247 and 270 each coordinate Zn(2+). Asp-274 is a catalytic residue. 274–278 (DSGTT) lines the pepstatin A pocket. Cys-312 and Cys-350 are joined by a disulfide. Asn-313 and Asn-321 each carry an N-linked (GlcNAc...) asparagine glycan.

The protein belongs to the peptidase A1 family. As to quaternary structure, monomer.

It localises to the secreted. It catalyses the reaction Preferential cleavage at the carboxyl of hydrophobic amino acids, but fails to cleave 15-Leu-|-Tyr-16, 16-Tyr-|-Leu-17 and 24-Phe-|-Phe-25 of insulin B chain. Activates trypsinogen, and degrades keratin.. Its function is as follows. Secreted aspartic peptidases (SAPs) are a group of ten acidic hydrolases considered as key virulence factors. These enzymes supply the fungus with nutrient amino acids as well as are able to degrade the selected host's proteins involved in the immune defense. Induces host inflammatory cytokine production in a proteolytic activity-independent way. Plays a role in tissue damage during superficial infection. Moreover, acts toward human hemoglobin though limited proteolysis to generate a variety of antimicrobial hemocidins, enabling to compete with the other microorganisms of the same physiological niche using the microbicidal peptides generated from the host protein. Plays a key role in defense against host by cleaving histatin-5 (Hst 5), a peptide from human saliva that carries out fungicidal activity. The cleavage rate decreases in an order of SAP2 &gt; SAP9 &gt; SAP3 &gt; SAP7 &gt; SAP4 &gt; SAP1 &gt; SAP8. The first cleavage occurs between residues 'Lys-17' and 'His-18' of Hst 5, giving DSHAKRHHGYKRKFHEK and HHSHRGY peptides. Simultaneously, the DSHAKRHHGYKRK peptide is also formed. Further fragmentation by SAP2 results in FHEK and DSHAKRHHGY products. In Candida albicans (Yeast), this protein is Secreted aspartic protease 2.